We begin with the raw amino-acid sequence, 139 residues long: Protein PsiE homolog (139 aa).

Helical transmembrane passes span 20 to 40 (IVLC…LVKI), 60 to 80 (AEQA…VQYF), 85 to 105 (HFPL…LIIV), and 111 to 131 (VDTI…CLVL).

It belongs to the PsiE family.

It localises to the cell inner membrane. The chain is Protein PsiE homolog from Haemophilus influenzae (strain 86-028NP).